Reading from the N-terminus, the 147-residue chain is Organic hydroperoxide resistance transcriptional regulator (147 aa).

The HTH marR-type domain maps to 11–141 (ENQLCFLLYA…LKSALYTLLE (131 aa)). At Cys-15 the chain carries Cysteine sulfenic acid (-SOH); alternate. The residue at position 15 (Cys-15) is an S-bacillithiol cysteine disulfide; alternate. The residue at position 15 (Cys-15) is an S-cysteinyl cysteine; alternate. Residues 15–16 (CF) constitute a cross-link (n,N-(cysteine-1,S-diyl)phenylalanine (Cys-Phe); alternate). The H-T-H motif DNA-binding region spans 57-80 (VKKMGEQLYLDSGTLTPMLKRMEQ).

As to quaternary structure, homodimer. Post-translationally, cys-15 is oxidized by organic peroxides to cysteine sulfenic acid (Cys-SOH). This can react with the alpha-amido of the following residue to form the sulfenamide cross-link. Oxidation or cross-linking results in the loss of DNA-binding activity and the inactivation of repressor function. Both the cysteine sulfenic acid and the sulfenamide cross-link can react with free cysteine or bacillithiol (BSH) to form mixed disulfides. Further reduction of OhrR by free sulfhydryl compounds restores repressor activity.

It localises to the cytoplasm. With respect to regulation, inactivated by oxidation of Cys-15 to a sulfenic acid. Organic peroxide sensor. Represses the expression of the peroxide-inducible gene ohrA by cooperative binding to two inverted repeat elements. The chain is Organic hydroperoxide resistance transcriptional regulator (ohrR) from Bacillus subtilis (strain 168).